Reading from the N-terminus, the 371-residue chain is D-alanine--D-alanine ligase (371 aa).

Residues 154-361 enclose the ATP-grasp domain; sequence KKLLVAEGLP…YPTLLAAMVD (208 aa). 182 to 237 provides a ligand contact to ATP; that stretch reads RERLGLPVFVKPARGGSSIGVSRVSDWAELPAAIEAARRHDPKVIVEAGIAGRELE. Residues Asp316, Glu328, and Asn330 each coordinate Mg(2+).

Belongs to the D-alanine--D-alanine ligase family. It depends on Mg(2+) as a cofactor. Mn(2+) serves as cofactor.

The protein resides in the cytoplasm. The enzyme catalyses 2 D-alanine + ATP = D-alanyl-D-alanine + ADP + phosphate + H(+). It participates in cell wall biogenesis; peptidoglycan biosynthesis. Its function is as follows. Cell wall formation. In Mycobacterium sp. (strain KMS), this protein is D-alanine--D-alanine ligase.